A 415-amino-acid chain; its full sequence is Nacrein-like protein C2 (415 aa).

Asn-27 is a glycosylation site (N-linked (GlcNAc...) asparagine). An Alpha-carbonic anhydrase domain is found at 33–414 (AGFSYDRSIC…KNKVTVYKSF (382 aa)). Residues His-132, His-134, and His-157 each contribute to the Zn(2+) site. Positions 201 to 297 (DEPDDEECKH…GENGHKHGCR (97 aa)) are disordered. Positions 207-219 (ECKHILKGHHPDN) are enriched in basic and acidic residues. Residues 220–289 (NENGNGDNGN…NNGENGNNGE (70 aa)) are compositionally biased toward low complexity. Tandem repeats lie at residues 225-227 (GDN), 228-230 (GNN), 231-233 (GYN), 234-236 (GDN), 237-239 (GNN), 240-242 (GDN), 243-245 (GNN), 246-248 (GYN), 249-251 (GDN), 252-254 (GNN), 255-257 (GVN), 258-260 (GNN), 261-263 (GYN), 264-266 (GDN), 267-269 (GNN), 270-272 (GDN), 273-275 (GNN), 276-278 (GEN), 279-281 (GNN), 282-284 (GEN), 285-286 (GN), and 288-290 (GEN). Residues 225-290 (GDNGNNGYNG…NGENGNNGEN (66 aa)) are 27 X 3 AA approximate tandem repeats of G-X-N. 355 to 356 (TT) is a substrate binding site.

The protein belongs to the alpha-carbonic anhydrase family. Homooligomer; disulfide-linked. May also be disulfide-linked to insoluble organic matrix. The cofactor is Zn(2+). In terms of tissue distribution, expressed in the mantle.

It is found in the secreted. The protein resides in the extracellular space. It localises to the extracellular matrix. The catalysed reaction is hydrogencarbonate + H(+) = CO2 + H2O. Its function is as follows. Acts as a negative regulator for calcification in the shells of mollusks. May function both as a calcium concentrator and as a carbonic anhydrase required for production of carbonate ions, which are assembled to CaCO(3) at mineralization sites. Is important for shell formation in both the calcitic prismatic layer and the aragonitic nacreous layer. Shows inhibitory activity of crystal formation when present in free state but, when attached to the insoluble matrix, may regulate the form and size of aragonite crystal. In Crassostrea nippona (Iwagaki oyster), this protein is Nacrein-like protein C2.